The primary structure comprises 222 residues: Probable nicotinate-nucleotide adenylyltransferase (222 aa).

Belongs to the NadD family.

It catalyses the reaction nicotinate beta-D-ribonucleotide + ATP + H(+) = deamido-NAD(+) + diphosphate. Its pathway is cofactor biosynthesis; NAD(+) biosynthesis; deamido-NAD(+) from nicotinate D-ribonucleotide: step 1/1. In terms of biological role, catalyzes the reversible adenylation of nicotinate mononucleotide (NaMN) to nicotinic acid adenine dinucleotide (NaAD). The sequence is that of Probable nicotinate-nucleotide adenylyltransferase from Pseudomonas syringae pv. tomato (strain ATCC BAA-871 / DC3000).